Reading from the N-terminus, the 103-residue chain is Large ribosomal subunit protein uL23 (103 aa).

The protein belongs to the universal ribosomal protein uL23 family. Part of the 50S ribosomal subunit. Contacts protein L29, and trigger factor when it is bound to the ribosome.

Its function is as follows. One of the early assembly proteins it binds 23S rRNA. One of the proteins that surrounds the polypeptide exit tunnel on the outside of the ribosome. Forms the main docking site for trigger factor binding to the ribosome. The protein is Large ribosomal subunit protein uL23 of Prochlorococcus marinus (strain NATL1A).